The sequence spans 168 residues: Large ribosomal subunit protein uL10 (168 aa).

This sequence belongs to the universal ribosomal protein uL10 family. In terms of assembly, part of the ribosomal stalk of the 50S ribosomal subunit. The N-terminus interacts with L11 and the large rRNA to form the base of the stalk. The C-terminus forms an elongated spine to which L12 dimers bind in a sequential fashion forming a multimeric L10(L12)X complex.

Forms part of the ribosomal stalk, playing a central role in the interaction of the ribosome with GTP-bound translation factors. The polypeptide is Large ribosomal subunit protein uL10 (Levilactobacillus brevis (strain ATCC 367 / BCRC 12310 / CIP 105137 / JCM 1170 / LMG 11437 / NCIMB 947 / NCTC 947) (Lactobacillus brevis)).